Here is a 464-residue protein sequence, read N- to C-terminus: Tryprostatin B synthase (464 aa).

Brevianamide F contacts are provided by M94 and E102. Positions 113, 201, and 203 each coordinate dimethylallyl diphosphate. Residue Y205 coordinates brevianamide F. Dimethylallyl diphosphate is bound by residues K294, Y296, Q380, Y382, Y446, and Y450.

It belongs to the tryptophan dimethylallyltransferase family.

It carries out the reaction brevianamide F + dimethylallyl diphosphate = tryprostatin B + diphosphate. It functions in the pathway mycotoxin biosynthesis. Brevianamide F prenyltransferase; part of the gene cluster that mediates the biosynthesis of fumitremorgins, indole alkaloids that carry not only intriguing chemical structures, but also interesting biological and pharmacological activities. The biosynthesis of fumitremorgin-type alkaloids begins by condensation of the two amino acids L-tryptophan and L-proline to brevianamide F, catalyzed by the non-ribosomal peptide synthetase ftmA. Brevianamide F is then prenylated by the prenyltransferase ftmPT1/ftmB in the presence of dimethylallyl diphosphate, resulting in the formation of tryprostatin B. The three cytochrome P450 monooxygenases, ftmP450-1/ftmC, ftmP450-2/ftmE and ftmP450-3/FtmG, are responsible for the conversion of tryprostatin B to 6-hydroxytryprostatin B, tryprostatin A to fumitremorgin C and fumitremorgin C to 12,13-dihydroxyfumitremorgin C, respectively. The putative methyltransferase ftmMT/ftmD is expected for the conversion of 6-hydroxytryprostatin B to tryprostatin A. FtmPT2/FtmH catalyzes the prenylation of 12,13-dihydroxyfumitre-morgin C in the presence of dimethylallyl diphosphate, resulting in the formation of fumitremorgin B. Fumitremorgin B is further converted to verruculogen by ftmOx1/ftmF via the insertion of an endoperoxide bond between the two prenyl moieties. In some fungal species, verruculogen is further converted to fumitremorgin A, but the enzymes involved in this step have not been identified yet. The sequence is that of Tryprostatin B synthase from Aspergillus fumigatus (Neosartorya fumigata).